The following is a 460-amino-acid chain: Interleukin-6 receptor subunit alpha (460 aa).

A signal peptide spans 1-19 (MLTVGCTLLVALLAAPAVA). The Ig-like C2-type domain maps to 20 to 116 (LVLGSCRALE…DVPPEEPKLS (97 aa)). The Extracellular portion of the chain corresponds to 20 to 364 (LVLGSCRALE…VQESSSMSLP (345 aa)). Disulfide bonds link C25–C190, C47–C92, C117–C128, and C162–C173. N32 and N55 each carry an N-linked (GlcNAc...) asparagine glycan. Fibronectin type-III domains lie at 109–214 (PPEE…VQPD) and 215–313 (PPAN…TPWI). The N-linked (GlcNAc...) asparagine glycan is linked to N150. A glycan (N-linked (GlcNAc...) asparagine) is linked at N218. A WSXWS motif motif is present at residues 300-304 (WSEWS). The chain crosses the membrane as a helical span at residues 365–385 (TFLVAGGSLAFGLLLCVFIIL). Residues 386–460 (RLKQKWKSEA…NSNRDYLFPR (75 aa)) lie on the Cytoplasmic side of the membrane.

Belongs to the type I cytokine receptor family. Type 3 subfamily. Component of a hexamer of two molecules each of IL6, IL6R and IL6ST; first binds to IL6 to associate with the signaling subunit IL6ST. Interacts (via N-terminal ectodomain) with SORL1; this interaction may affect IL6-binding to IL6R, hence decrease IL6 'classic-signaling'. In terms of assembly, also interacts with SORL1; this interaction leads to soluble IL6R internalization. May form a trimeric complex with the soluble SORL1 ectodomain and circulating IL6 receptor; this interaction might stabilize circulating IL6, hence promote IL6 'trans-signaling'. A short soluble form is also released from the membrane by proteolysis. The sIL6R is formed by limited proteolysis of membrane-bound receptors, a process referred to as ectodomain shedding. mIL6R is cleaved by the proteases ADAM10 and ADAM17. In terms of processing, glycosylated. Glycosylation is dispensable for transport, signaling, and cell-surface turnover. Glycosylation at Asn-55 is a protease-regulatory exosite. Glycosylation is required for ADAM17-mediated proteolysis. As to expression, expressed by dendritic cells. Detected in the cerebrospinal fluid.

The protein localises to the cell membrane. Its subcellular location is the secreted. With respect to regulation, classic and trans-signaling are both inhibited by tocilizumab, a humanized monoclonal antibody that blocks interleukin IL6R signaling. Its function is as follows. Part of the receptor for interleukin 6. Binds to IL6 with low affinity, but does not transduce a signal. Signal activation necessitate an association with IL6ST. Activation leads to the regulation of the immune response, acute-phase reactions and hematopoiesis. The interaction with membrane-bound IL6R and IL6ST stimulates 'classic signaling', the restricted expression of the IL6R limits classic IL6 signaling to only a few tissues such as the liver and some cells of the immune system. Whereas the binding of IL6 and soluble IL6R to IL6ST stimulates 'trans-signaling'. Alternatively, 'cluster signaling' occurs when membrane-bound IL6:IL6R complexes on transmitter cells activate IL6ST receptors on neighboring receiver cells. Signaling via the membrane-bound IL6R is mostly regenerative and anti-inflammatory. Drives naive CD4(+) T cells to the Th17 lineage, through 'cluster signaling' by dendritic cells. Functionally, soluble form of IL6 receptor (sIL6R) that acts as an agonist of IL6 activity. The IL6:sIL6R complex (hyper-IL6) binds to IL6ST/gp130 on cell surfaces and induces signaling also on cells that do not express membrane-bound IL6R in a process called IL6 'trans-signaling'. sIL6R is causative for the pro-inflammatory properties of IL6 and an important player in the development of chronic inflammatory diseases. In complex with IL6, is required for induction of VEGF production. Plays a protective role during liver injury, being required for maintenance of tissue regeneration. 'Trans-signaling' in central nervous system regulates energy and glucose homeostasis. This chain is Interleukin-6 receptor subunit alpha, found in Mus musculus (Mouse).